Here is a 166-residue protein sequence, read N- to C-terminus: Large ribosomal subunit protein uL10 (166 aa).

Belongs to the universal ribosomal protein uL10 family. Part of the ribosomal stalk of the 50S ribosomal subunit. The N-terminus interacts with L11 and the large rRNA to form the base of the stalk. The C-terminus forms an elongated spine to which L12 dimers bind in a sequential fashion forming a multimeric L10(L12)X complex.

In terms of biological role, forms part of the ribosomal stalk, playing a central role in the interaction of the ribosome with GTP-bound translation factors. The polypeptide is Large ribosomal subunit protein uL10 (Bacillus mycoides (strain KBAB4) (Bacillus weihenstephanensis)).